The primary structure comprises 296 residues: 4-hydroxybenzoate octaprenyltransferase (296 aa).

The next 8 helical transmembrane spans lie at 28–48 (PIGI…AGKG), 52–72 (LKTV…GCVI), 102–122 (ALAL…FTNA), 146–166 (YYPQ…AFTA), 169–189 (GDLP…TVGY), 219–239 (VIIL…GARF), 241–261 (LGAC…WEFW), and 275–295 (FLHN…DYAV).

Belongs to the UbiA prenyltransferase family. Mg(2+) serves as cofactor.

The protein localises to the cell inner membrane. The enzyme catalyses all-trans-octaprenyl diphosphate + 4-hydroxybenzoate = 4-hydroxy-3-(all-trans-octaprenyl)benzoate + diphosphate. It participates in cofactor biosynthesis; ubiquinone biosynthesis. In terms of biological role, catalyzes the prenylation of para-hydroxybenzoate (PHB) with an all-trans polyprenyl group. Mediates the second step in the final reaction sequence of ubiquinone-8 (UQ-8) biosynthesis, which is the condensation of the polyisoprenoid side chain with PHB, generating the first membrane-bound Q intermediate 3-octaprenyl-4-hydroxybenzoate. The protein is 4-hydroxybenzoate octaprenyltransferase of Pseudomonas savastanoi pv. phaseolicola (strain 1448A / Race 6) (Pseudomonas syringae pv. phaseolicola (strain 1448A / Race 6)).